Consider the following 1049-residue polypeptide: Cilia- and flagella-associated protein 337 (1049 aa).

The EF-hand domain maps to 81–116; the sequence is GTKEEYGELFDKVDVAQDGFINWDKLTSFILLELYE. 6 WD repeats span residues 138-177, 358-397, 401-440, 487-528, 531-570, and 633-671; these read KHKD…QETF, NIAQ…KPVG, GHSA…SIQR, SHEK…KQFT, HGNA…HHTL, and QHHD…AHHV. The interval 691–712 is disordered; the sequence is LLSAGRSQPSHPMADHSTTGVR. The segment covering 695–711 has biased composition (polar residues); it reads GRSQPSHPMADHSTTGV. WD repeat units lie at residues 719–766, 769–809, and 825–866; these read EGKN…LLAE, AHSG…LNSS, and PHED…VWIF.

The protein belongs to the CFAP337 family. As to quaternary structure, associates with components of the nexin-dynein regulatory complex (N-DRC) and the CFAP184:CFAP263 complex.

It is found in the cell projection. The protein localises to the cilium. In terms of biological role, associates with components of the nexin-dynein regulatory complex (N-DRC), a key regulator of ciliary/flagellar motility, and might act as an inner dynein arm (IDA) hub or linkage. The polypeptide is Cilia- and flagella-associated protein 337 (Homo sapiens (Human)).